We begin with the raw amino-acid sequence, 341 residues long: ATPase GET3 (341 aa).

Residue 34–41 (KGGVGKTT) coordinates ATP. Residue D63 is part of the active site. Residues E245 and N272 each contribute to the ATP site. Residues C283 and C286 each contribute to the Zn(2+) site.

The protein belongs to the arsA ATPase family. In terms of assembly, homodimer.

The protein localises to the cytoplasm. Its subcellular location is the endoplasmic reticulum. Functionally, ATPase required for the post-translational delivery of tail-anchored (TA) proteins to the endoplasmic reticulum. Recognizes and selectively binds the transmembrane domain of TA proteins in the cytosol. This complex then targets to the endoplasmic reticulum by membrane-bound receptors, where the tail-anchored protein is released for insertion. This process is regulated by ATP binding and hydrolysis. ATP binding drives the homodimer towards the closed dimer state, facilitating recognition of newly synthesized TA membrane proteins. ATP hydrolysis is required for insertion. Subsequently, the homodimer reverts towards the open dimer state, lowering its affinity for the membrane-bound receptor, and returning it to the cytosol to initiate a new round of targeting. The protein is ATPase GET3 of Paracoccidioides brasiliensis (strain Pb18).